The following is a 370-amino-acid chain: MKAGRYIGVMSGTSLDGVDVVLAAISNKLVAQQANHFLPYPQTLRQRILAVCQGQPVTLHELGLLDAQLGELYAKAIMELLAKARLSAADITAIGCHGQTIWHEPESDIPFTMQIGDNNRVAALTGITTVGDFRRRDMAYGGQGAPLVPAFHLAVLGHPTEKRIVLNIGGIANISLLLPGVAVKGYDTGPGNMLLDSWNWVHNQTAYDDNGQWAATGNVNTQLLQEMLADPYFSRSAPKSTGREYFNTQWLHYHLAKVPNVFPEDVQATLVELTAISIAQQVQLNGGCERLLVCGGGAKNGQIMHRLASLLPGTEVSLTDKYGLSGDDMEALAFAWLAARTMANEPGNLPSVTGASRETILGAIYPTNPR.

Residue 12-19 (GTSLDGVD) participates in ATP binding.

The protein belongs to the anhydro-N-acetylmuramic acid kinase family.

It catalyses the reaction 1,6-anhydro-N-acetyl-beta-muramate + ATP + H2O = N-acetyl-D-muramate 6-phosphate + ADP + H(+). The protein operates within amino-sugar metabolism; 1,6-anhydro-N-acetylmuramate degradation. Its pathway is cell wall biogenesis; peptidoglycan recycling. Functionally, catalyzes the specific phosphorylation of 1,6-anhydro-N-acetylmuramic acid (anhMurNAc) with the simultaneous cleavage of the 1,6-anhydro ring, generating MurNAc-6-P. Is required for the utilization of anhMurNAc either imported from the medium or derived from its own cell wall murein, and thus plays a role in cell wall recycling. The protein is Anhydro-N-acetylmuramic acid kinase of Proteus mirabilis (strain HI4320).